A 308-amino-acid chain; its full sequence is HTH-type transcriptional activator AllS (308 aa).

Residues 2 to 59 enclose the HTH lysR-type domain; it reads FDPETLRTFIAVAETGSFSKAAERLCKTTATISYRIKLLEENTGVALFFRTTRSVTLT. Residues 19–38 constitute a DNA-binding region (H-T-H motif); sequence FSKAAERLCKTTATISYRIK.

It belongs to the LysR transcriptional regulatory family.

Positive regulator essential for the expression of AllD operon. Binds to the AllD promoter. This Escherichia coli O157:H7 protein is HTH-type transcriptional activator AllS (allS).